The sequence spans 176 residues: Molybdopterin synthase catalytic subunit (176 aa).

Substrate-binding positions include 36–38, 102–103, Lys118, and 125–127; these read TVR, HR, and KKE.

The protein belongs to the MoaE family. As to quaternary structure, heterotetramer of 2 MoaD subunits and 2 MoaE subunits. Also stable as homodimer. The enzyme changes between these two forms during catalysis.

The enzyme catalyses 2 [molybdopterin-synthase sulfur-carrier protein]-C-terminal-Gly-aminoethanethioate + cyclic pyranopterin phosphate + H2O = molybdopterin + 2 [molybdopterin-synthase sulfur-carrier protein]-C-terminal Gly-Gly + 2 H(+). It functions in the pathway cofactor biosynthesis; molybdopterin biosynthesis. Functionally, converts molybdopterin precursor Z into molybdopterin. This requires the incorporation of two sulfur atoms into precursor Z to generate a dithiolene group. The sulfur is provided by MoaD. The polypeptide is Molybdopterin synthase catalytic subunit (moaE) (Ralstonia nicotianae (strain ATCC BAA-1114 / GMI1000) (Ralstonia solanacearum)).